We begin with the raw amino-acid sequence, 120 residues long: NAD(P)H-quinone oxidoreductase subunit 3, chloroplastic (120 aa).

3 consecutive transmembrane segments (helical) span residues 9 to 29, 64 to 84, and 88 to 108; these read IFWA…FVSG, MFAL…PWAM, and VLGI…IVGL.

This sequence belongs to the complex I subunit 3 family. NDH is composed of at least 16 different subunits, 5 of which are encoded in the nucleus.

The protein localises to the plastid. It is found in the chloroplast thylakoid membrane. It catalyses the reaction a plastoquinone + NADH + (n+1) H(+)(in) = a plastoquinol + NAD(+) + n H(+)(out). It carries out the reaction a plastoquinone + NADPH + (n+1) H(+)(in) = a plastoquinol + NADP(+) + n H(+)(out). In terms of biological role, NDH shuttles electrons from NAD(P)H:plastoquinone, via FMN and iron-sulfur (Fe-S) centers, to quinones in the photosynthetic chain and possibly in a chloroplast respiratory chain. The immediate electron acceptor for the enzyme in this species is believed to be plastoquinone. Couples the redox reaction to proton translocation, and thus conserves the redox energy in a proton gradient. In Daucus carota (Wild carrot), this protein is NAD(P)H-quinone oxidoreductase subunit 3, chloroplastic.